A 287-amino-acid polypeptide reads, in one-letter code: UPF0725 protein At1g19060 (287 aa).

The protein belongs to the UPF0725 (EMB2204) family.

The sequence is that of UPF0725 protein At1g19060 from Arabidopsis thaliana (Mouse-ear cress).